Here is an 879-residue protein sequence, read N- to C-terminus: Metabotropic glutamate receptor 3 (879 aa).

Residues methionine 1–serine 22 form the signal peptide. The Extracellular segment spans residues leucine 23–tryptophan 576. A disulfide bond links cysteine 57 and cysteine 99. L-glutamate-binding positions include serine 151 and alanine 172–threonine 174. Asparagine 209 carries N-linked (GlcNAc...) asparagine glycosylation. Tyrosine 222 contacts L-glutamate. Cystine bridges form between cysteine 240/cysteine 527, cysteine 361/cysteine 373, cysteine 412/cysteine 419, cysteine 509/cysteine 528, cysteine 513/cysteine 531, cysteine 534/cysteine 546, and cysteine 549/cysteine 562. N-linked (GlcNAc...) asparagine glycosylation occurs at asparagine 292. Aspartate 301 contacts L-glutamate. L-glutamate is bound at residue lysine 389. N-linked (GlcNAc...) asparagine glycans are attached at residues asparagine 414 and asparagine 439. The helical transmembrane segment at alanine 577–isoleucine 599 threads the bilayer. Topologically, residues lysine 600–glutamate 613 are cytoplasmic. A helical transmembrane segment spans residues leucine 614–alanine 634. Residues lysine 635–arginine 645 lie on the Extracellular side of the membrane. A helical membrane pass occupies residues leucine 646–asparagine 664. Residues cysteine 665–glutamine 688 lie on the Cytoplasmic side of the membrane. Residues valine 689–leucine 709 traverse the membrane as a helical segment. Topologically, residues glutamate 710–aspartate 734 are extracellular. The helical transmembrane segment at serine 735–phenylalanine 756 threads the bilayer. At lysine 757–lysine 769 the chain is on the cytoplasmic side. A helical membrane pass occupies residues phenylalanine 770–threonine 792. The Extracellular portion of the chain corresponds to serine 793–threonine 802. The chain crosses the membrane as a helical span at residues methionine 803 to phenylalanine 828. The Cytoplasmic segment spans residues glutamine 829–leucine 879.

It belongs to the G-protein coupled receptor 3 family. Interacts with TAMALIN. Detected in brain cortex, thalamus, subthalamic nucleus, substantia nigra, hypothalamus, hippocampus, corpus callosum, caudate nucleus and amygdala.

Its subcellular location is the cell membrane. Functionally, G-protein coupled receptor for glutamate. Ligand binding causes a conformation change that triggers signaling via guanine nucleotide-binding proteins (G proteins) and modulates the activity of down-stream effectors. Signaling inhibits adenylate cyclase activity. In Homo sapiens (Human), this protein is Metabotropic glutamate receptor 3 (GRM3).